The sequence spans 114 residues: Lymphotactin (114 aa).

An N-terminal signal peptide occupies residues 1 to 21 (MRLLILALLGICSLTAYIVEG). A disulfide bond links Cys-32 and Cys-69. The disordered stretch occupies residues 91–114 (RNNMIQTKPTGTQQSTNTAVTLTG).

This sequence belongs to the intercrine gamma family. As to expression, highest level in spleen, lower in peripheral leukocytes and very low levels in lung, colon and small intestine.

The protein resides in the secreted. Chemotactic activity for lymphocytes but not for monocytes or neutrophils. In thymus, mediates medullary accumulation of thymic dendritic cells and contributes to regulatoy T cell development, playing a role in self-tolerance establishment. The chain is Lymphotactin (XCL1) from Homo sapiens (Human).